The sequence spans 208 residues: Octanoyltransferase (208 aa).

The 179-residue stretch at 30–208 folds into the BPL/LPL catalytic domain; that stretch reads GTASEAVFIL…ILKQEFYKIF (179 aa). Substrate-binding positions include 69-76, 142-144, and 155-157; these read RGGKFTYH, SIG, and GVA. C173 acts as the Acyl-thioester intermediate in catalysis.

Belongs to the LipB family.

The protein resides in the cytoplasm. It catalyses the reaction octanoyl-[ACP] + L-lysyl-[protein] = N(6)-octanoyl-L-lysyl-[protein] + holo-[ACP] + H(+). The protein operates within protein modification; protein lipoylation via endogenous pathway; protein N(6)-(lipoyl)lysine from octanoyl-[acyl-carrier-protein]: step 1/2. Its function is as follows. Catalyzes the transfer of endogenously produced octanoic acid from octanoyl-acyl-carrier-protein onto the lipoyl domains of lipoate-dependent enzymes. Lipoyl-ACP can also act as a substrate although octanoyl-ACP is likely to be the physiological substrate. The polypeptide is Octanoyltransferase (Orientia tsutsugamushi (strain Boryong) (Rickettsia tsutsugamushi)).